The primary structure comprises 246 residues: Glucosamine-6-phosphate deaminase (246 aa).

Residue Asp-67 is the Proton acceptor; for enolization step of the active site. Asn-136 serves as the catalytic For ring-opening step. The Proton acceptor; for ring-opening step role is filled by His-138. Glu-143 functions as the For ring-opening step in the catalytic mechanism.

The protein belongs to the glucosamine/galactosamine-6-phosphate isomerase family. NagB subfamily.

It catalyses the reaction alpha-D-glucosamine 6-phosphate + H2O = beta-D-fructose 6-phosphate + NH4(+). The protein operates within amino-sugar metabolism; N-acetylneuraminate degradation; D-fructose 6-phosphate from N-acetylneuraminate: step 5/5. Catalyzes the reversible isomerization-deamination of glucosamine 6-phosphate (GlcN6P) to form fructose 6-phosphate (Fru6P) and ammonium ion. In Halalkalibacterium halodurans (strain ATCC BAA-125 / DSM 18197 / FERM 7344 / JCM 9153 / C-125) (Bacillus halodurans), this protein is Glucosamine-6-phosphate deaminase.